Here is a 217-residue protein sequence, read N- to C-terminus: Uracil-DNA glycosylase (217 aa).

Catalysis depends on aspartate 62, which acts as the Proton acceptor.

This sequence belongs to the uracil-DNA glycosylase (UDG) superfamily. UNG family.

The protein resides in the cytoplasm. The enzyme catalyses Hydrolyzes single-stranded DNA or mismatched double-stranded DNA and polynucleotides, releasing free uracil.. Functionally, excises uracil residues from the DNA which can arise as a result of misincorporation of dUMP residues by DNA polymerase or due to deamination of cytosine. The protein is Uracil-DNA glycosylase of Streptococcus uberis (strain ATCC BAA-854 / 0140J).